The sequence spans 243 residues: F-box protein pof15 (243 aa).

One can recognise an F-box domain in the interval 28 to 73 (QTSSTLLPVEVIDSVMQYLPAHDVIQSSFASYPLTLIANKIIRARL).

The protein operates within protein modification; protein ubiquitination. In terms of biological role, probable substrate recognition component of a SCF (SKP1-CUL1-F-box protein) E3 ubiquitin-protein ligase complex that mediates the ubiquitination and subsequent proteasomal degradation of target proteins. The polypeptide is F-box protein pof15 (pof15) (Schizosaccharomyces pombe (strain 972 / ATCC 24843) (Fission yeast)).